Here is a 349-residue protein sequence, read N- to C-terminus: N-acetyltaurine hydrolase (349 aa).

Residues His26, His28, Glu169, His201, His230, and Asp298 each coordinate a divalent metal cation.

The protein belongs to the metallo-dependent hydrolases superfamily. Phosphotriesterase family. A divalent metal cation is required as a cofactor.

It localises to the cytoplasm. The protein resides in the cytosol. It carries out the reaction N-acetyltaurine + H2O = taurine + acetate. The catalysed reaction is N-propanoyltaurine + H2O = propanoate + taurine. It catalyses the reaction N-acetyl-L-methionine + H2O = L-methionine + acetate. The enzyme catalyses N-acetyl-L-isoleucine + H2O = L-isoleucine + acetate. It carries out the reaction N-acetyl-L-leucine + H2O = L-leucine + acetate. The catalysed reaction is N-acetyl-L-valine + H2O = L-valine + acetate. In terms of biological role, N-acetyltaurine hydrolase that catalyzes the hydrolysis of N-acetyltaurine into taurine and acetate. PTER also acts on other N-acetyl amino acids (Met, Ile, Leu, Val) and N-propionyltaurine, but at lower rates. The chain is N-acetyltaurine hydrolase (pter) from Danio rerio (Zebrafish).